Here is a 658-residue protein sequence, read N- to C-terminus: Threonine--tRNA ligase (658 aa).

The TGS domain occupies 1 to 61 (MSDVRVIIQR…KDGEEVEPVQ (61 aa)). The tract at residues 259-554 (DHRKLGNELD…LLEHYAGAFP (296 aa)) is catalytic. Positions 353, 404, and 531 each coordinate Zn(2+).

It belongs to the class-II aminoacyl-tRNA synthetase family. Homodimer. It depends on Zn(2+) as a cofactor.

It is found in the cytoplasm. The catalysed reaction is tRNA(Thr) + L-threonine + ATP = L-threonyl-tRNA(Thr) + AMP + diphosphate + H(+). Its function is as follows. Catalyzes the attachment of threonine to tRNA(Thr) in a two-step reaction: L-threonine is first activated by ATP to form Thr-AMP and then transferred to the acceptor end of tRNA(Thr). Also edits incorrectly charged L-seryl-tRNA(Thr). The polypeptide is Threonine--tRNA ligase (Streptomyces avermitilis (strain ATCC 31267 / DSM 46492 / JCM 5070 / NBRC 14893 / NCIMB 12804 / NRRL 8165 / MA-4680)).